Reading from the N-terminus, the 641-residue chain is Sodium-dependent nutrient amino acid transporter 1 (641 aa).

Positions 1–34 (MELKGVQPSNGSANGNGTTNAASTEKADTEKQTA) are disordered. Residues 1–38 (MELKGVQPSNGSANGNGTTNAASTEKADTEKQTAERTN) are Cytoplasmic-facing. The segment covering 9 to 24 (SNGSANGNGTTNAAST) has biased composition (low complexity). Positions 25–34 (EKADTEKQTA) are enriched in basic and acidic residues. 3 helical membrane passes run 39 to 59 (WGNGLEFLMSCISVSVGLGNV), 72 to 92 (GAFLIPYIIVLFLIGKPMYYL), and 109 to 129 (SVVPGFVGVGYGQAFGTICII). 2 N-linked (GlcNAc...) asparagine glycosylation sites follow: asparagine 183 and asparagine 188. The next 9 membrane-spanning stretches (helical) occupy residues 229–249 (PDWKLTLALFVAWVVIFLVIM), 258–278 (AAYFLALFPYVVLFVLLIRAV), 307–327 (AVVQCFFSLAVGSGPIIMFAS), 341–361 (IVTTLDTLTSLLGGITIFAIL), 401–421 (LFSVLFFFMLFVLGIGSIVAL), 441–461 (VALITSACGFLMGLVYVTPGG), 474–494 (TYVVFILAIFELAGIVWVYGL), 516–536 (CWSFFTPVMMIIIFIYSMATI), and 552–572 (IAGWLLFAIGAAQFPLWGLWY).

This sequence belongs to the sodium:neurotransmitter symporter (SNF) (TC 2.A.22) family.

The protein resides in the membrane. Its function is as follows. Unusual broad substrate spectrum amino acid:sodium cotransporter that promotes absorption of the D isomers of essential amino acids. Neutral amino acids are the preferred substrates, especially methionine and phenylalanine. The polypeptide is Sodium-dependent nutrient amino acid transporter 1 (Drosophila yakuba (Fruit fly)).